Here is a 658-residue protein sequence, read N- to C-terminus: Pro-secreted protein ORF2 (658 aa).

A signal peptide spans 1–19 (MRSRALLFLLFVLLPMLPA). Residues 62-124 (SDIPAAAGTG…PDTAPVPDAD (63 aa)) are disordered. A compositionally biased stretch (low complexity) spans 91–122 (RPAASTRRRPAPAGASPLTAVAPAPDTAPVPD). 2 N-linked (GlcNAc...) asparagine; by host glycosylation sites follow: asparagine 135 and asparagine 308. The segment at 366–392 (IALTLFNLADTLLGGLPTELISSAGGQ) is particle formation. A glycan (N-linked (GlcNAc...) asparagine; by host) is linked at asparagine 560. An oligomerization region spans residues 583-608 (TTNLGSGPVSVSAVGVLAPHSALAAL).

The protein belongs to the hepevirus capsid protein family. Homodimer. In terms of assembly, self-assembles to form the capsid. The capsid is dominated by dimers that define the 30 morphological units. Interacts with phosphorylated protein ORF3. Interacts with host TMEM134. Interacts with host ASGR1 and ASGR2; these interactions facilitate infection of host hepatocytes. In terms of processing, cleaved by host protease in the N-terminus. Post-translationally, N-glycosylated. Not N-glycosylated. The C-terminus of the capsid protein ORF2 is truncated in non-enveloped virions shedded in feces, probably due to host proteases.

The protein localises to the secreted. Its subcellular location is the virion. The protein resides in the host cytoplasm. It localises to the host endoplasmic reticulum. It is found in the host Golgi apparatus. The protein localises to the host cell surface. Its subcellular location is the host nucleus. In terms of biological role, plays a role in the inhibition of host antibody-mediated neutralization without blocking viral cell entry. Forms an icosahedral capsid with a T=1 symmetry and a 34 nm diameter. The capsid is composed of 60 copies linked to each other. Binds to the 5' end of the genomic RNA to mediate genome encapsidation. Binds to heparin surface proteoglycans (HSPGs) to mediate viral entry. Additionally, the interactions with host ASGR1 and ASGR2 facilitate viral infection of hepatocytes. Inhibits IFN production by blocking host TBK1-induced IRF3 phosphorylation. The nuclear form probably modulates host gene expression. The sequence is that of Pro-secreted protein ORF2 from Bandicota bengalensis (lesser bandicoot rat).